The chain runs to 549 residues: Lipase 4 (549 aa).

Positions 1–15 (MKLALVLSLIVSVAA) are cleaved as a signal peptide. The cysteines at positions 75 and 112 are disulfide-linked. Ser-224 acts as the Acyl-ester intermediate in catalysis. The cysteines at positions 283 and 292 are disulfide-linked. Glu-356 acts as the Charge relay system in catalysis. Asn-366 carries N-linked (GlcNAc...) asparagine glycosylation. The active-site Charge relay system is His-464.

This sequence belongs to the type-B carboxylesterase/lipase family.

The catalysed reaction is a triacylglycerol + H2O = a diacylglycerol + a fatty acid + H(+). In Diutina rugosa (Yeast), this protein is Lipase 4 (LIP4).